Reading from the N-terminus, the 1303-residue chain is DNA-directed RNA polymerase subunit beta'' (1303 aa).

Zn(2+) contacts are provided by C225, C299, C306, and C309.

It belongs to the RNA polymerase beta' chain family. RpoC2 subfamily. As to quaternary structure, in plastids the minimal PEP RNA polymerase catalytic core is composed of four subunits: alpha, beta, beta', and beta''. When a (nuclear-encoded) sigma factor is associated with the core the holoenzyme is formed, which can initiate transcription. Zn(2+) is required as a cofactor.

Its subcellular location is the plastid. The protein localises to the chloroplast. The catalysed reaction is RNA(n) + a ribonucleoside 5'-triphosphate = RNA(n+1) + diphosphate. Functionally, DNA-dependent RNA polymerase catalyzes the transcription of DNA into RNA using the four ribonucleoside triphosphates as substrates. This is DNA-directed RNA polymerase subunit beta'' from Rhodomonas salina (Cryptomonas salina).